The sequence spans 376 residues: Protein MGF 360-7L (376 aa).

This sequence belongs to the asfivirus MGF 360 family.

In terms of biological role, plays a role in virus cell tropism, and may be required for efficient virus replication in macrophages. This is Protein MGF 360-7L from Ornithodoros (relapsing fever ticks).